A 1148-amino-acid polypeptide reads, in one-letter code: Envelopment polyprotein (1148 aa).

The signal sequence occupies residues 1–23 (MGKSSPVCLYLILQGLLLFDTVN). The Lumenal portion of the chain corresponds to 24-496 (AKNLNELKME…PGLHGWATVL (473 aa)). Disulfide bonds link C34/C159, C68/C165, C117/C136, C141/C146, C183/C193, and C218/C257. N142 carries N-linked (GlcNAc...) asparagine; by host glycosylation. An N-linked (GlcNAc...) asparagine; by host glycan is attached at N357. Intrachain disulfides connect C386-C445, C390-C399, C415-C434, and C462-C485. N409 carries an N-linked (GlcNAc...) asparagine; by host glycan. The helical transmembrane segment at 497-517 (LLLTFCFGWVLIPTITMILLK) threads the bilayer. Residues 518–637 (ILIAFAYLCS…LSLFRYRSRF (120 aa)) are Cytoplasmic-facing. The segment at 526 to 543 (CSKYNTDSKFRILVEKVK) is binding to the ribonucleoprotein. CCHC-type zinc fingers lie at residues 555-575 (CEVC…RKSC) and 580-601 (CPYC…FKVC). Binding to the ribonucleoprotein regions lie at residues 598–615 (FKVC…KKSL) and 621–635 (MQGC…RYRS). The region spanning 621-644 (MQGCYRTLSLFRYRSRFFVGLVWC) is the ITAM domain. The YxxL signature appears at 625 to 628 (YRTL). A helical membrane pass occupies residues 638–658 (FVGLVWCMLLVLELIVWAASA). Residues 659-1115 (ETQNLNDGWT…WVLGVLNGNW (457 aa)) lie on the Lumenal side of the membrane. 8 disulfide bridges follow: C745/C780, C749/C787, C761/C894, C775/C905, C790/C913, C816/C825, C833/C842, and C873/C877. The segment at 767-787 (YEYETGWGCNPPDCPGVGTGC) is fusion loop. N-linked (GlcNAc...) asparagine; by host glycosylation is present at N937. Disulfide bonds link C979/C1009, C1002/C1054, C1019/C1024, C1055/C1060, and C1094/C1098. Residues 1116–1136 (MVVAVLIALLILSIFLFALCC) traverse the membrane as a helical segment. The binding to the ribonucleoprotein stretch occupies residues 1131–1148 (LFALCCPRRPSYKKDHKP). At 1137–1148 (PRRPSYKKDHKP) the chain is on the cytoplasmic side.

This sequence belongs to the hantavirus envelope glycoprotein family. Homodimer. Homotetramer; forms heterotetrameric Gn-Gc spikes in the pre-fusion conformation. Interacts (via C-terminus) with the nucleoprotein. Interacts with host TUFM; this interaction contributes to the virus-induced degradation of mitochondria by autophagy, which leads to degradation of host MAVS and inhibition of type I interferon (IFN) responses. Interacts with host MAP1LC3B; this interaction contributes to the virus-induced degradation of mitochondria by autophagy, which leads to degradation of host MAVS and inhibition of type I interferon (IFN) responses. As to quaternary structure, homodimer. Homotetramer; forms heterotetrameric Gn-Gc spikes in the pre-fusion conformation. Homotrimer; forms homotrimer in the post-fusion conformation at acidic pH. Interacts (via C-terminus) with the nucleoprotein. Envelope polyprotein precursor is quickly cleaved in vivo just after synthesis, presumably by host signal peptidase.

The protein localises to the virion membrane. It localises to the host cell surface. Its subcellular location is the host Golgi apparatus membrane. It is found in the host endoplasmic reticulum membrane. The protein resides in the host mitochondrion. Functionally, forms homotetramers with glycoprotein C at the surface of the virion. Attaches the virion to host cell receptors including integrin ITGAV/ITGB3. This attachment induces virion internalization predominantly through clathrin-dependent endocytosis. Mediates the assembly and budding of infectious virus particles through its interaction with the nucleocapsid protein and the viral genome. May dysregulate normal immune and endothelial cell responses through an ITAM motif. Translocates to mitochondria, binds to host TUFM and recruits MAP1LC3B. These interactions induce mitochondrial autophagy and therefore destruction of host MAVS leading to inhibition of type I interferon (IFN) responses. Concomitant breakdown of glycoprotein N is apparently prevented by the nucleoprotein that may inhibit Gn-stimulated autophagosome-lysosome fusion. Interacts with the viral genomic RNA. Forms heterooctamers with glycoprotein N at the surface of the virion. Attaches the virion to host cell receptors including integrin ITGAV/ITGB3. This attachment induces virion internalization predominantly through clathrin-dependent endocytosis. Class II fusion protein that promotes fusion of viral membrane with host endosomal membrane after endocytosis of the virion. The polypeptide is Envelopment polyprotein (GP) (Homo sapiens (Human)).